Here is a 501-residue protein sequence, read N- to C-terminus: Atypical kinase COQ8, mitochondrial (501 aa).

A mitochondrion-targeting transit peptide spans 1 to 29 (MVTNMVKLRNLRRLYCSSRLLRTIQNGRI). The tract at residues 41–69 (YTTKSAKEGEENVERKHEEEKKDTLKSSS) is disordered. Over residues 45-65 (SAKEGEENVERKHEEEKKDTL) the composition is skewed to basic and acidic residues. The KxGQ motif signature appears at 134–137 (KIGQ). One can recognise a Protein kinase domain in the interval 188–501 (KFDKIPMAAA…LFKEIFAYKV (314 aa)). Positions 195–198 (AAAS) match the AAAS motif motif. ATP is bound by residues Ser-198, Lys-216, and 303–306 (MTRM). The active-site Proton acceptor is the Asp-346. ATP is bound by residues Asn-351 and Asp-365.

The protein belongs to the protein kinase superfamily. ADCK protein kinase family. In terms of assembly, forms homopolymers. Predominantly associated with a complex of about 500 kDa.

The protein localises to the mitochondrion inner membrane. It functions in the pathway cofactor biosynthesis; ubiquinone biosynthesis. Functionally, atypical kinase involved in the biosynthesis of coenzyme Q, also named ubiquinone, an essential lipid-soluble electron transporter for aerobic cellular respiration. Its substrate specificity is still unclear: may act as a protein kinase that mediates phosphorylation of COQ3, COQ5 and/or COQ7. According to other reports, acts as a small molecule kinase, possibly a lipid kinase that phosphorylates a prenyl lipid in the ubiquinone biosynthesis pathway, as suggested by its ability to bind coenzyme Q lipid intermediates. The protein is Atypical kinase COQ8, mitochondrial (COQ8) of Saccharomyces cerevisiae (strain ATCC 204508 / S288c) (Baker's yeast).